A 305-amino-acid chain; its full sequence is Protoheme IX farnesyltransferase 2 (305 aa).

8 helical membrane-spanning segments follow: residues 31 to 51 (VVML…ETWI), 53 to 73 (WKIL…AAVI), 103 to 123 (ALVF…LWVN), 125 to 145 (LTAL…TMYL), 152 to 172 (NIVI…TAVT), 179 to 199 (ALLL…ALAI), 231 to 251 (VLLA…AIYL), and 277 to 297 (AMKT…VLLV).

This sequence belongs to the UbiA prenyltransferase family. Protoheme IX farnesyltransferase subfamily.

The protein localises to the cell inner membrane. It carries out the reaction heme b + (2E,6E)-farnesyl diphosphate + H2O = Fe(II)-heme o + diphosphate. It participates in porphyrin-containing compound metabolism; heme O biosynthesis; heme O from protoheme: step 1/1. In terms of biological role, converts heme B (protoheme IX) to heme O by substitution of the vinyl group on carbon 2 of heme B porphyrin ring with a hydroxyethyl farnesyl side group. The protein is Protoheme IX farnesyltransferase 2 of Pseudoalteromonas atlantica (strain T6c / ATCC BAA-1087).